A 429-amino-acid chain; its full sequence is Adenylosuccinate synthetase (429 aa).

GTP is bound by residues glycine 12 to lysine 18 and glycine 40 to threonine 42. The active-site Proton acceptor is the aspartate 13. Aspartate 13 and glycine 40 together coordinate Mg(2+). IMP-binding positions include aspartate 13–lysine 16, asparagine 38–histidine 41, threonine 128, arginine 142, glutamine 223, threonine 238, and arginine 302. Histidine 41 acts as the Proton donor in catalysis. A substrate-binding site is contributed by threonine 298–arginine 304. Residues arginine 304, serine 330 to aspartate 332, and serine 412 to glycine 414 contribute to the GTP site.

Belongs to the adenylosuccinate synthetase family. As to quaternary structure, homodimer. Mg(2+) serves as cofactor.

It localises to the cytoplasm. It catalyses the reaction IMP + L-aspartate + GTP = N(6)-(1,2-dicarboxyethyl)-AMP + GDP + phosphate + 2 H(+). It participates in purine metabolism; AMP biosynthesis via de novo pathway; AMP from IMP: step 1/2. Its function is as follows. Plays an important role in the de novo pathway of purine nucleotide biosynthesis. Catalyzes the first committed step in the biosynthesis of AMP from IMP. In Lysinibacillus sphaericus (strain C3-41), this protein is Adenylosuccinate synthetase.